Consider the following 210-residue polypeptide: Dephospho-CoA kinase (210 aa).

A DPCK domain is found at 4 to 201; sequence IVALTGGICS…NFYIYLSKQN (198 aa). Residue 12–17 participates in ATP binding; sequence CSGKTT.

The protein belongs to the CoaE family.

The protein resides in the cytoplasm. It catalyses the reaction 3'-dephospho-CoA + ATP = ADP + CoA + H(+). It participates in cofactor biosynthesis; coenzyme A biosynthesis; CoA from (R)-pantothenate: step 5/5. Functionally, catalyzes the phosphorylation of the 3'-hydroxyl group of dephosphocoenzyme A to form coenzyme A. This Buchnera aphidicola subsp. Schizaphis graminum (strain Sg) protein is Dephospho-CoA kinase.